A 556-amino-acid chain; its full sequence is MGDNGRMTTLCNIAASLPRLARERPDQIAIRCPGGRGANGMAAYDVTLSYAELDARSDAIAAGLALHGIGRGVRAVVMVRPSPEFFLLMFALFKAGAVPVLVDPGIDKRALKQCLDEAQPQAFIGIPLAQLARRLLRWAPSATQIVTVGGRYCWGGVTLARVERDGAGAGSQLADTAADDVAAILFTSGSTGVPKGVVYRHRHFVGQIELLRNAFDMQPGGVDLPTFPPFALFDPALGLTSVIPDMDPTRPATADPRKLHDAMTRFGVTQLFGSPALMRVLADYGQPLPNVRLATSAGAPVPPDVVAKIRALLPADAQFWTPYGATECLPVAAIEGRTLDATRTATEAGAGTCVGQVVAPNEVRIIAIDDAAIPEWSGVRVLAAGEVGEITVAGPTTTDTYFNRDAATRNAKIRERCSDGSERVVHRMGDVGYFDAEGRLWFCGRKTHRVETATGPLYTEQVEPIFNVHPQVRRTALVGVGTPGQQQPVLCVELQPGVAASAFAEVETALRAVGAAHPHTAGIARFLRHSGFPVDIRHNAKIGREKLAIWAAQQRV.

ATP contacts are provided by residues 187 to 195 (TSGSTGVPK), 321 to 326 (TPYGAT), aspartate 430, and arginine 445.

It belongs to the ATP-dependent AMP-binding enzyme family. In terms of assembly, monomer. Forms a complex with OleB and OleD.

The protein localises to the cytoplasm. It carries out the reaction a (2R,3S)-2-alkyl-3-hydroxyalkanoate + ATP = a cis-3-alkyl-4-alkyloxetan-2-one + AMP + diphosphate. Functionally, involved in olefin biosynthesis. Catalyzes the conversion of 2-alkyl-3-hydroxyalkanoic acids to beta-lactones in the presence of ATP. The chain is Olefin beta-lactone synthetase from Xanthomonas campestris pv. campestris (strain ATCC 33913 / DSM 3586 / NCPPB 528 / LMG 568 / P 25).